The chain runs to 425 residues: Probable G-protein coupled receptor 63 (425 aa).

Residues methionine 1 to glutamine 87 are Extracellular-facing. 3 N-linked (GlcNAc...) asparagine glycosylation sites follow: asparagine 22, asparagine 34, and asparagine 68. A helical membrane pass occupies residues isoleucine 88–valine 112. The Cytoplasmic segment spans residues tyrosine 113–asparagine 123. The helical transmembrane segment at isoleucine 124–isoleucine 148 threads the bilayer. Residues leucine 149–methionine 165 are Extracellular-facing. A helical membrane pass occupies residues phenylalanine 166 to valine 190. At glutamine 191–lysine 202 the chain is on the cytoplasmic side. Residues valine 203–glycine 222 traverse the membrane as a helical segment. The Extracellular portion of the chain corresponds to asparagine 223–alanine 247. A helical membrane pass occupies residues tyrosine 248–leucine 272. Residues asparagine 273–threonine 321 are Cytoplasmic-facing. A helical membrane pass occupies residues isoleucine 322 to phenylalanine 345. The Extracellular portion of the chain corresponds to serine 346–glutamate 357. Residues isoleucine 358 to tryptophan 379 traverse the membrane as a helical segment. Residues arginine 380–leucine 425 are Cytoplasmic-facing.

Belongs to the G-protein coupled receptor 1 family. Brain specific.

Its subcellular location is the cell membrane. Orphan receptor. May play a role in brain function. This chain is Probable G-protein coupled receptor 63 (Gpr63), found in Mus musculus (Mouse).